Reading from the N-terminus, the 1530-residue chain is B-cell CLL/lymphoma 9-like protein (1530 aa).

Disordered regions lie at residues 1 to 101 (MHSE…VLEP), 155 to 187 (QGHS…TDLH), 246 to 353 (HISS…PSVL), 398 to 439 (SGTG…IGGG), 473 to 503 (QTQN…LSSP), 821 to 1076 (QNGR…QNPL), 1250 to 1279 (KGMS…SEVI), and 1310 to 1331 (SETM…QVSS). Residues 8-18 (SNHGKQVTSGA) are compositionally biased toward polar residues. A compositionally biased stretch (low complexity) spans 19–34 (QSQLPNVNQAQQQAPA). Basic and acidic residues predominate over residues 81–93 (ERSVSIDTGDQRE). The span at 156-165 (GHSGSSTTGH) shows a compositional bias: low complexity. Residues 170–180 (GGPGLGSGHGP) show a composition bias toward gly residues. 2 stretches are compositionally biased toward polar residues: residues 247–264 (ISSS…QSGT) and 278–287 (GTSTPSSTGH). 2 stretches are compositionally biased toward low complexity: residues 409 to 426 (GPNG…NSND) and 485 to 503 (SLMG…LSSP). Composition is skewed to polar residues over residues 875–891 (LSST…TGSR), 920–930 (QLKSPSLSQEP), and 944–953 (SPSQLPQSGP). Low complexity-rich tracts occupy residues 960-971 (AASGAGTPSSTS), 979-994 (GPSL…PGHL), and 1031-1060 (SSST…INPS). The segment covering 1258–1268 (PHQPDSFPPMP) has biased composition (pro residues).

This sequence belongs to the BCL9 family.

The protein localises to the nucleus. In terms of biological role, transcriptional regulator that may act as an activator. Plays a role for mesoderm patterning in early embryogenesis. This Danio rerio (Zebrafish) protein is B-cell CLL/lymphoma 9-like protein (bcl9l).